The following is a 908-amino-acid chain: Metabotropic glutamate receptor 8 (908 aa).

The first 33 residues, 1–33, serve as a signal peptide directing secretion; the sequence is MVCEGKRSTSCPCFFLLTAKFYWILTMMQRTHS. Residues 34–583 lie on the Extracellular side of the membrane; the sequence is QEYAHSIRLD…IIKLEWHSPW (550 aa). Cysteines 64 and 106 form a disulfide. Residue asparagine 95 is glycosylated (N-linked (GlcNAc...) asparagine). Residues serine 156, 177–179, and tyrosine 227 contribute to the L-glutamate site; that span reads AST. 7 cysteine pairs are disulfide-bonded: cysteine 246–cysteine 534, cysteine 369–cysteine 384, cysteine 424–cysteine 431, cysteine 516–cysteine 535, cysteine 520–cysteine 538, cysteine 541–cysteine 553, and cysteine 556–cysteine 569. N-linked (GlcNAc...) asparagine glycosylation occurs at asparagine 298. Aspartate 309 is an L-glutamate binding site. Lysine 401 is an L-glutamate binding site. Asparagine 452 and asparagine 480 each carry an N-linked (GlcNAc...) asparagine glycan. A glycan (N-linked (GlcNAc...) asparagine) is linked at asparagine 565. Residues 584 to 608 form a helical membrane-spanning segment; sequence AVVPVFIAILGIIATTFVIVTFVRY. Residues 609-620 lie on the Cytoplasmic side of the membrane; sequence NDTPIVRASGRE. A helical membrane pass occupies residues 621–641; it reads LSYVLLTGIFLCYSITFLMIA. Over 642-647 the chain is Extracellular; the sequence is APDTII. The helical transmembrane segment at 648–668 threads the bilayer; the sequence is CSFRRIFLGLGMCFSYAALLT. The Cytoplasmic segment spans residues 669–695; it reads KTNRIHRIFEQGKKSVTAPKFISPASQ. A helical membrane pass occupies residues 696 to 716; that stretch reads LVITFSLISVQLLGVFVWFVV. The Extracellular portion of the chain corresponds to 717 to 746; that stretch reads DPPHTIIDYGEQRTLDPENARGVLKCDISD. A helical membrane pass occupies residues 747–768; sequence LSLICSLGYSILLMVTCTVYAI. The Cytoplasmic portion of the chain corresponds to 769–781; the sequence is KTRGVPETFNEAK. The chain crosses the membrane as a helical span at residues 782–803; that stretch reads PIGFTMYTTCIIWLAFIPIFFG. Topologically, residues 804–818 are extracellular; sequence TAQSAEKMYIQTTTL. Residues 819-843 traverse the membrane as a helical segment; it reads TVSMSLSASVSLGMLYMPKVYIIIF. Residues 844 to 908 are Cytoplasmic-facing; the sequence is HPEQNVQKRK…TYISYSNHSI (65 aa). A Glycyl lysine isopeptide (Lys-Gly) (interchain with G-Cter in SUMO1) cross-link involves residue lysine 882.

The protein belongs to the G-protein coupled receptor 3 family. In terms of assembly, interacts with PICK1. As to expression, strongly expressed in olfactory bulb, accessory olfactory bulb, and mammillary body. Weaker expression in the retina, and in scattered cells in the cortex and hindbrain.

It is found in the cell membrane. Functionally, G-protein coupled receptor for glutamate. Ligand binding causes a conformation change that triggers signaling via guanine nucleotide-binding proteins (G proteins) and modulates the activity of down-stream effectors. Signaling inhibits adenylate cyclase activity. This chain is Metabotropic glutamate receptor 8 (Grm8), found in Mus musculus (Mouse).